Here is a 621-residue protein sequence, read N- to C-terminus: MIEDNINNNENENEDKNGNGNENENDKNNKNNKFEALLMQSPISQSTPFIFPSPKINSNILTTEPLTTQLSSSPTTTPSLKKRKPKTVRNPFIGPSSNKTKSNFPEFPSWTFEKNNNDFCQGGLSIKNKHLFTFDDNNNNNNNNNNNNNNNNNNNNNNNNNLNINFNNRSIYNNYKNNNNFNQSDDEDCEKDNDRFLNSENFDEEEDEEDEDDCTNKNFEWSIDMLATIMPVNITLDNQQNNLNSTNNSDNGYESSTELFEFKKWKIEDEKKSNDYFSRPTIYPHVKINNQNNQNNQNNSFLFKSSKTNQSIQQLQQQQQQQQQQQQQQNNNDNNNNNNNNNNNNNNSTLTSSNSLSGIKRKSSGSNYNSEDDTYSIEKDQTGVSAFVDDILIGDINLSSISSIGGGNSGIVFGRPTIFNTPTHFNTYIYNNNNNNNNNNNNNNNNNNNNNNNNNNNNNSGSNSKPIIAKRFPNRPQFPECLEESFSINLNKQSQNNNNNNNNNNNNNNNNNNNNNNNNNNNNNNNNNNNNNNNNIKIINNNNNDSDIFLTPMTPVKITSVTKSTRKSKYNFHVTDPLILPDISPIKIKHPITPTQINSNSSNNIVSPSSSPSKKFEYCKF.

4 stretches are compositionally biased toward low complexity: residues 1–10, 63–79, 137–182, and 309–347; these read MIEDNINNNE, TEPL…TTPS, NNNN…NNFN, and NQSI…NNNN. 7 disordered regions span residues 1–29, 63–100, 135–194, 307–374, 430–471, 492–539, and 594–614; these read MIED…DKNN, TEPL…SNKT, DDNN…KDND, KTNQ…EDDT, YNNN…IAKR, KQSQ…IKII, and PTQI…SPSK. Residues 348-357 are compositionally biased toward polar residues; the sequence is STLTSSNSLS. Low complexity-rich tracts occupy residues 431–459, 496–539, and 597–613; these read NNNN…NNNN, NNNN…IKII, and INSN…SSPS.

This is an uncharacterized protein from Dictyostelium discoideum (Social amoeba).